The primary structure comprises 74 residues: Progonadoliberin-3 (74 aa).

Positions 1-15 (VQVVVLALVAQVTLS) are cleaved as a signal peptide. Pyrrolidone carboxylic acid is present on Gln-16. Gly-25 carries the glycine amide modification.

It belongs to the GnRH family.

The protein localises to the secreted. In terms of biological role, stimulates the secretion of gonadotropins. This Oncorhynchus mykiss (Rainbow trout) protein is Progonadoliberin-3 (gnrh3).